A 91-amino-acid polypeptide reads, in one-letter code: MSDFNLVGVIRVMPTDPDVNLDELEEKLKKVIPEKYGLAKVEREPIAFGLVALKFYVLGRDEEGYSFDEVAEKFEEVENVESAEVETVSRI.

Belongs to the EF-1-beta/EF-1-delta family.

In terms of biological role, promotes the exchange of GDP for GTP in EF-1-alpha/GDP, thus allowing the regeneration of EF-1-alpha/GTP that could then be used to form the ternary complex EF-1-alpha/GTP/AAtRNA. This is Elongation factor 1-beta (ef1b) from Pyrococcus horikoshii (strain ATCC 700860 / DSM 12428 / JCM 9974 / NBRC 100139 / OT-3).